Reading from the N-terminus, the 155-residue chain is Ribonuclease H (155 aa).

Positions 1 to 146 (MPELFAYTDG…ADELARAGMK (146 aa)) constitute an RNase H type-1 domain. Mg(2+)-binding residues include Asp-9, Glu-52, Asp-74, and Asp-138.

Belongs to the RNase H family. Monomer. Requires Mg(2+) as cofactor.

The protein localises to the cytoplasm. The catalysed reaction is Endonucleolytic cleavage to 5'-phosphomonoester.. Functionally, endonuclease that specifically degrades the RNA of RNA-DNA hybrids. The chain is Ribonuclease H from Ruegeria pomeroyi (strain ATCC 700808 / DSM 15171 / DSS-3) (Silicibacter pomeroyi).